We begin with the raw amino-acid sequence, 95 residues long: Large ribosomal subunit protein bL25 (95 aa).

The protein belongs to the bacterial ribosomal protein bL25 family. Part of the 50S ribosomal subunit; part of the 5S rRNA/L5/L18/L25 subcomplex. Contacts the 5S rRNA. Binds to the 5S rRNA independently of L5 and L18.

In terms of biological role, this is one of the proteins that binds to the 5S RNA in the ribosome where it forms part of the central protuberance. This chain is Large ribosomal subunit protein bL25, found in Actinobacillus pleuropneumoniae serotype 5b (strain L20).